Consider the following 105-residue polypeptide: MTLDALFATILDRKTADPASSWTAQLLSKGPEKCAEKFGEEAVEAIIEAVKGDRDALTGEAADVLYHLLVMLAACDVDLKDVLAELERRQNTSGIAEKQGRFKAP.

This sequence belongs to the PRA-PH family.

It localises to the cytoplasm. The catalysed reaction is 1-(5-phospho-beta-D-ribosyl)-ATP + H2O = 1-(5-phospho-beta-D-ribosyl)-5'-AMP + diphosphate + H(+). It participates in amino-acid biosynthesis; L-histidine biosynthesis; L-histidine from 5-phospho-alpha-D-ribose 1-diphosphate: step 2/9. The protein is Phosphoribosyl-ATP pyrophosphatase of Roseobacter denitrificans (strain ATCC 33942 / OCh 114) (Erythrobacter sp. (strain OCh 114)).